The sequence spans 295 residues: ATP synthase gamma chain (295 aa).

The protein belongs to the ATPase gamma chain family. In terms of assembly, F-type ATPases have 2 components, CF(1) - the catalytic core - and CF(0) - the membrane proton channel. CF(1) has five subunits: alpha(3), beta(3), gamma(1), delta(1), epsilon(1). CF(0) has three main subunits: a, b and c.

The protein localises to the cell membrane. Its function is as follows. Produces ATP from ADP in the presence of a proton gradient across the membrane. The gamma chain is believed to be important in regulating ATPase activity and the flow of protons through the CF(0) complex. The protein is ATP synthase gamma chain of Caldanaerobacter subterraneus subsp. tengcongensis (strain DSM 15242 / JCM 11007 / NBRC 100824 / MB4) (Thermoanaerobacter tengcongensis).